The following is a 175-amino-acid chain: 3-hydroxydecanoyl-[acyl-carrier-protein] dehydratase (175 aa).

The active site involves His71.

Belongs to the thioester dehydratase family. FabA subfamily. As to quaternary structure, homodimer.

Its subcellular location is the cytoplasm. The catalysed reaction is a (3R)-hydroxyacyl-[ACP] = a (2E)-enoyl-[ACP] + H2O. It carries out the reaction (3R)-hydroxydecanoyl-[ACP] = (2E)-decenoyl-[ACP] + H2O. The enzyme catalyses (2E)-decenoyl-[ACP] = (3Z)-decenoyl-[ACP]. It functions in the pathway lipid metabolism; fatty acid biosynthesis. Functionally, necessary for the introduction of cis unsaturation into fatty acids. Catalyzes the dehydration of (3R)-3-hydroxydecanoyl-ACP to E-(2)-decenoyl-ACP and then its isomerization to Z-(3)-decenoyl-ACP. Can catalyze the dehydratase reaction for beta-hydroxyacyl-ACPs with saturated chain lengths up to 16:0, being most active on intermediate chain length. The protein is 3-hydroxydecanoyl-[acyl-carrier-protein] dehydratase of Rhodopseudomonas palustris (strain ATCC BAA-98 / CGA009).